A 674-amino-acid chain; its full sequence is tRNA 5-methylaminomethyl-2-thiouridine biosynthesis bifunctional protein MnmC (674 aa).

The segment at 1 to 237 (MLTSYQLESP…KREMTVGELN (237 aa)) is tRNA (mnm(5)s(2)U34)-methyltransferase. The tract at residues 270 to 674 (VGAGLAGANT…IRDLKRSQIL (405 aa)) is FAD-dependent cmnm(5)s(2)U34 oxidoreductase.

It in the N-terminal section; belongs to the methyltransferase superfamily. tRNA (mnm(5)s(2)U34)-methyltransferase family. In the C-terminal section; belongs to the DAO family. FAD is required as a cofactor.

It localises to the cytoplasm. It carries out the reaction 5-aminomethyl-2-thiouridine(34) in tRNA + S-adenosyl-L-methionine = 5-methylaminomethyl-2-thiouridine(34) in tRNA + S-adenosyl-L-homocysteine + H(+). Functionally, catalyzes the last two steps in the biosynthesis of 5-methylaminomethyl-2-thiouridine (mnm(5)s(2)U) at the wobble position (U34) in tRNA. Catalyzes the FAD-dependent demodification of cmnm(5)s(2)U34 to nm(5)s(2)U34, followed by the transfer of a methyl group from S-adenosyl-L-methionine to nm(5)s(2)U34, to form mnm(5)s(2)U34. The protein is tRNA 5-methylaminomethyl-2-thiouridine biosynthesis bifunctional protein MnmC of Marinomonas sp. (strain MWYL1).